We begin with the raw amino-acid sequence, 348 residues long: Putative agmatine deiminase (348 aa).

Residue cysteine 335 is the Amidino-cysteine intermediate of the active site.

It belongs to the agmatine deiminase family.

The catalysed reaction is agmatine + H2O = N-carbamoylputrescine + NH4(+). This is Putative agmatine deiminase from Legionella pneumophila subsp. pneumophila (strain Philadelphia 1 / ATCC 33152 / DSM 7513).